A 291-amino-acid chain; its full sequence is Proteasome subunit beta (291 aa).

Residues 1-56 (MTRSFPDRLPTNLAFPGISVINQSSFVDLLRRQAPELLPVSLGGGQSGGGQQLSHG) constitute a propeptide, removed in mature form; by autocatalysis. Thr-57 serves as the catalytic Nucleophile.

The protein belongs to the peptidase T1B family. The 20S proteasome core is composed of 14 alpha and 14 beta subunits that assemble into four stacked heptameric rings, resulting in a barrel-shaped structure. The two inner rings, each composed of seven catalytic beta subunits, are sandwiched by two outer rings, each composed of seven alpha subunits. The catalytic chamber with the active sites is on the inside of the barrel. Has a gated structure, the ends of the cylinder being occluded by the N-termini of the alpha-subunits. Is capped by the proteasome-associated ATPase, ARC.

The protein localises to the cytoplasm. The enzyme catalyses Cleavage of peptide bonds with very broad specificity.. Its pathway is protein degradation; proteasomal Pup-dependent pathway. The formation of the proteasomal ATPase ARC-20S proteasome complex, likely via the docking of the C-termini of ARC into the intersubunit pockets in the alpha-rings, may trigger opening of the gate for substrate entry. Interconversion between the open-gate and close-gate conformations leads to a dynamic regulation of the 20S proteasome proteolysis activity. Functionally, component of the proteasome core, a large protease complex with broad specificity involved in protein degradation. The polypeptide is Proteasome subunit beta (Mycobacterium leprae (strain Br4923)).